The following is a 138-amino-acid chain: Putative acyl-CoA thioesterase YneP (138 aa).

The active site involves Asp-16.

This sequence belongs to the 4-hydroxybenzoyl-CoA thioesterase family.

Its function is as follows. Has acyl-CoA thioesterase activity. In Bacillus subtilis (strain 168), this protein is Putative acyl-CoA thioesterase YneP (yneP).